A 636-amino-acid chain; its full sequence is Protein BCAP (636 aa).

Coiled coils occupy residues 36–97 (LSCL…EQKE), 141–220 (ESEN…WNLQ), 249–325 (YKQR…HGKN), 377–484 (ISSE…ECQE), and 519–631 (LEEE…KMNS).

The protein belongs to the ODF2 family. As to expression, mainly expressed in trachea and testis. Not detected in bone marrow, bladder, leukocytes. Only weakly detected in tongue, stomach, brain and ovaries.

It localises to the cytoplasm. The protein localises to the cytoskeleton. Its subcellular location is the microtubule organizing center. It is found in the centrosome. The protein resides in the centriole. It localises to the centriolar satellite. The protein localises to the cilium basal body. Its function is as follows. Acts as a suppressor of ciliogenesis, specifically, the initiation of ciliogenesis. The protein is Protein BCAP of Homo sapiens (Human).